An 868-amino-acid chain; its full sequence is Leucine--tRNA ligase (868 aa).

The 'HIGH' region motif lies at 42 to 52; sequence PYPSGKLHMGH. The 'KMSKS' region signature appears at 627 to 631; it reads KMSKS. Residue Lys630 participates in ATP binding.

Belongs to the class-I aminoacyl-tRNA synthetase family.

The protein resides in the cytoplasm. It carries out the reaction tRNA(Leu) + L-leucine + ATP = L-leucyl-tRNA(Leu) + AMP + diphosphate. The polypeptide is Leucine--tRNA ligase (Pseudomonas entomophila (strain L48)).